Consider the following 301-residue polypeptide: Mitochondrial import receptor subunit TOM40 homolog (301 aa).

The tract at residues 1–20 is disordered; it reads MATPTESEFAAPIPQTNPGS.

It belongs to the Tom40 family. Forms part of the preprotein translocase complex of the outer mitochondrial membrane (TOM complex). Interacts with mitochondrial targeting sequences.

Its subcellular location is the mitochondrion outer membrane. Channel-forming protein essential for import of protein precursors into mitochondria. Specifically required for nnt-1 accumulation in the mitochondria and may be involved in the secretion of daf-28/insulin from the mitochondria. Required for embryonic and larval development. The protein is Mitochondrial import receptor subunit TOM40 homolog of Caenorhabditis briggsae.